The chain runs to 380 residues: Putative 8-amino-7-oxononanoate synthase (380 aa).

Arg18 contributes to the substrate binding site. 105 to 106 provides a ligand contact to pyridoxal 5'-phosphate; that stretch reads GY. Residue His130 participates in substrate binding. Pyridoxal 5'-phosphate is bound by residues Ser178, 204 to 207, and 235 to 238; these read DEAH and TFGK. Position 238 is an N6-(pyridoxal phosphate)lysine (Lys238). Thr352 contacts substrate.

Belongs to the class-II pyridoxal-phosphate-dependent aminotransferase family. BioF subfamily. In terms of assembly, homodimer. Pyridoxal 5'-phosphate serves as cofactor.

It carries out the reaction 6-carboxyhexanoyl-[ACP] + L-alanine + H(+) = (8S)-8-amino-7-oxononanoate + holo-[ACP] + CO2. It participates in cofactor biosynthesis; biotin biosynthesis. In terms of biological role, catalyzes the decarboxylative condensation of pimeloyl-[acyl-carrier protein] and L-alanine to produce 8-amino-7-oxononanoate (AON), [acyl-carrier protein], and carbon dioxide. The protein is Putative 8-amino-7-oxononanoate synthase (bioF) of Glaesserella parasuis serovar 5 (strain SH0165) (Haemophilus parasuis).